We begin with the raw amino-acid sequence, 486 residues long: Probable cytosol aminopeptidase (486 aa).

This sequence belongs to the peptidase M17 family. Mn(2+) serves as cofactor.

It localises to the cytoplasm. The catalysed reaction is Release of an N-terminal amino acid, Xaa-|-Yaa-, in which Xaa is preferably Leu, but may be other amino acids including Pro although not Arg or Lys, and Yaa may be Pro. Amino acid amides and methyl esters are also readily hydrolyzed, but rates on arylamides are exceedingly low.. It catalyses the reaction Release of an N-terminal amino acid, preferentially leucine, but not glutamic or aspartic acids.. In terms of biological role, presumably involved in the processing and regular turnover of intracellular proteins. Catalyzes the removal of unsubstituted N-terminal amino acids from various peptides. The polypeptide is Probable cytosol aminopeptidase (pepA) (Synechococcus elongatus (strain ATCC 33912 / PCC 7942 / FACHB-805) (Anacystis nidulans R2)).